We begin with the raw amino-acid sequence, 246 residues long: Bis(5'-nucleosyl)-tetraphosphatase PrpE [asymmetrical] (246 aa).

Belongs to the PrpE family. Requires Ni(2+) as cofactor.

The catalysed reaction is P(1),P(4)-bis(5'-guanosyl) tetraphosphate + H2O = GMP + GTP + 2 H(+). Functionally, asymmetrically hydrolyzes Ap4p to yield AMP and ATP. The sequence is that of Bis(5'-nucleosyl)-tetraphosphatase PrpE [asymmetrical] from Bacillus anthracis (strain A0248).